The following is a 971-amino-acid chain: Mating-type switching protein swi1 (971 aa).

A phosphoserine mark is found at S528, S536, and S970.

In terms of assembly, fork protection complex (FPC) consisting of swi1 and swi3 interacts with mat1 cis-acting sequences and mat1-proximal polar-terminator of replication (RTS1).

The protein localises to the nucleus. Its function is as follows. Forms a fork protection complex (FPC) with swi3. FPC coordinates leading and lagging strand synthesis and moves with the replication fork. It is required for programmed fork-pausing which is necessary for mating-type switching. FPC stabilizes replication forks in a configuration that is recognized by replication checkpoint sensors. It is involved in termination at the mat1-proximal polar-terminator of replication (RTS1) and also required for activation of the Rad53-like checkpoint kinase cds1. The protein is Mating-type switching protein swi1 (swi1) of Schizosaccharomyces pombe (strain 972 / ATCC 24843) (Fission yeast).